Consider the following 231-residue polypeptide: 2-C-methyl-D-erythritol 4-phosphate cytidylyltransferase (231 aa).

This sequence belongs to the IspD/TarI cytidylyltransferase family. IspD subfamily.

It catalyses the reaction 2-C-methyl-D-erythritol 4-phosphate + CTP + H(+) = 4-CDP-2-C-methyl-D-erythritol + diphosphate. It participates in isoprenoid biosynthesis; isopentenyl diphosphate biosynthesis via DXP pathway; isopentenyl diphosphate from 1-deoxy-D-xylulose 5-phosphate: step 2/6. In terms of biological role, catalyzes the formation of 4-diphosphocytidyl-2-C-methyl-D-erythritol from CTP and 2-C-methyl-D-erythritol 4-phosphate (MEP). This is 2-C-methyl-D-erythritol 4-phosphate cytidylyltransferase from Rubrobacter xylanophilus (strain DSM 9941 / JCM 11954 / NBRC 16129 / PRD-1).